Here is a 63-residue protein sequence, read N- to C-terminus: MAVPARHTSKQKKRSRRAHLKLSVPAMHYDATTGEYRLSHRVSPKGYYKGRQVVSENSASDND.

The protein belongs to the bacterial ribosomal protein bL32 family.

This Lactobacillus delbrueckii subsp. bulgaricus (strain ATCC 11842 / DSM 20081 / BCRC 10696 / JCM 1002 / NBRC 13953 / NCIMB 11778 / NCTC 12712 / WDCM 00102 / Lb 14) protein is Large ribosomal subunit protein bL32.